The following is a 143-amino-acid chain: Sorting nexin-3 (143 aa).

The PX domain occupies 23 to 140 (NILEIDVINP…SSFLQSPEFK (118 aa)). A 1,2-diacyl-sn-glycero-3-phospho-(1D-myo-inositol-3-phosphate) is bound by residues R66, S68, K92, R97, and R106.

It belongs to the sorting nexin family.

It localises to the cytoplasm. The protein localises to the golgi apparatus membrane. The protein resides in the prevacuolar compartment membrane. Its function is as follows. Required for retention of late Golgi membrane proteins. Component of the retrieval machinery that functions by direct interaction with the cytosolic tails of certain TGN membrane proteins during the sorting/budding process at the prevacuolar compartment. Binds phosphatidylinositol 3-phosphate (PtdIns(P3)). The chain is Sorting nexin-3 (snx3) from Schizosaccharomyces pombe (strain 972 / ATCC 24843) (Fission yeast).